Reading from the N-terminus, the 267-residue chain is Glutamate 5-kinase (267 aa).

K17 is an ATP binding site. Substrate contacts are provided by S57, D144, and N156. ATP contacts are provided by residues 176-177 (SD) and 218-224 (TGGMATK).

Belongs to the glutamate 5-kinase family.

It localises to the cytoplasm. It catalyses the reaction L-glutamate + ATP = L-glutamyl 5-phosphate + ADP. Its pathway is amino-acid biosynthesis; L-proline biosynthesis; L-glutamate 5-semialdehyde from L-glutamate: step 1/2. In terms of biological role, catalyzes the transfer of a phosphate group to glutamate to form L-glutamate 5-phosphate. The protein is Glutamate 5-kinase of Clostridium acetobutylicum (strain ATCC 824 / DSM 792 / JCM 1419 / IAM 19013 / LMG 5710 / NBRC 13948 / NRRL B-527 / VKM B-1787 / 2291 / W).